The chain runs to 221 residues: Iron-sulfur cluster repair protein YtfE (221 aa).

This sequence belongs to the RIC family. YtfE subfamily. Homodimer.

The protein resides in the cytoplasm. Di-iron-containing protein involved in the repair of iron-sulfur clusters damaged by oxidative and nitrosative stress conditions. The polypeptide is Iron-sulfur cluster repair protein YtfE (Pectobacterium atrosepticum (strain SCRI 1043 / ATCC BAA-672) (Erwinia carotovora subsp. atroseptica)).